The following is a 159-amino-acid chain: Protein-export protein SecB (159 aa).

This sequence belongs to the SecB family. Homotetramer, a dimer of dimers. One homotetramer interacts with 1 SecA dimer.

The protein localises to the cytoplasm. Its function is as follows. One of the proteins required for the normal export of preproteins out of the cell cytoplasm. It is a molecular chaperone that binds to a subset of precursor proteins, maintaining them in a translocation-competent state. It also specifically binds to its receptor SecA. The chain is Protein-export protein SecB from Pseudomonas fluorescens (strain SBW25).